The sequence spans 968 residues: Alanine--tRNA ligase, cytoplasmic (968 aa).

Met1 carries the N-acetylmethionine modification. ATP-binding positions include Arg77, His95, Trp176, and 214–216; that span reads IWN. Residues Asn216 and Asp239 each contribute to the L-alanine site. ATP is bound at residue Gly243. Phosphoserine occurs at positions 399 and 555. Positions 605, 609, 723, and 727 each coordinate Zn(2+). Residues 750–763 carry the Nuclear localization signal motif; sequence RRIVAVTGAEAQKA. Lys876 carries the N6-acetyllysine modification. The residue at position 943 (Lys943) is an N6,N6,N6-trimethyllysine; alternate. Lys943 bears the N6,N6-dimethyllysine; alternate mark. An N6-methyllysine; alternate modification is found at Lys943.

It belongs to the class-II aminoacyl-tRNA synthetase family. As to quaternary structure, monomer. Interacts with ANKRD16; the interaction is direct. The cofactor is Zn(2+). In terms of processing, ISGylated. Methylation at 'Lys-943' by METTL21C.

It is found in the cytoplasm. The protein resides in the nucleus. It catalyses the reaction tRNA(Ala) + L-alanine + ATP = L-alanyl-tRNA(Ala) + AMP + diphosphate. The catalysed reaction is (S)-lactate + ATP + H(+) = (S)-lactoyl-AMP + diphosphate. It carries out the reaction (S)-lactoyl-AMP + L-lysyl-[protein] = N(6)-[(S)-lactoyl]-L-lysyl-[protein] + AMP + 2 H(+). Its activity is regulated as follows. The protein lactyltransferase activity is inhibited by beta-alanine. Its function is as follows. Catalyzes the attachment of alanine to tRNA(Ala) in a two-step reaction: alanine is first activated by ATP to form Ala-AMP and then transferred to the acceptor end of tRNA(Ala). Also edits incorrectly charged tRNA(Ala) via its editing domain. In presence of high levels of lactate, also acts as a protein lactyltransferase that mediates lactylation of lysine residues in target proteins, such as TEAD1, TP53/p53 and YAP1. Protein lactylation takes place in a two-step reaction: lactate is first activated by ATP to form lactate-AMP and then transferred to lysine residues of target proteins. Acts as an inhibitor of TP53/p53 activity by catalyzing lactylation of TP53/p53. Acts as a positive regulator of the Hippo pathway by mediating lactylation of TEAD1 and YAP1. The polypeptide is Alanine--tRNA ligase, cytoplasmic (Mus musculus (Mouse)).